The chain runs to 266 residues: Nuclease (266 aa).

An N-terminal signal peptide occupies residues 1–21 (MRFNNKMLALAALLFAAQASA). Cys30 and Cys34 are disulfide-bonded. Residue His110 is the Proton acceptor of the active site. Mg(2+) is bound at residue Asn140. Cys222 and Cys264 are disulfide-bonded.

The protein belongs to the DNA/RNA non-specific endonuclease family. In terms of assembly, homodimer. The cofactor is Mg(2+).

The protein localises to the secreted. The catalysed reaction is Endonucleolytic cleavage to 5'-phosphomononucleotide and 5'-phosphooligonucleotide end-products.. Its function is as follows. Catalyzes the hydrolysis of both DNA and RNA, double- or single-stranded, at the 3'position of the phosphodiester bond to produce 5'-phosphorylated mono-, di-, tri- and tetranucleotides. DNA is a slightly better substrate than RNA. This is Nuclease (nucA) from Serratia marcescens.